We begin with the raw amino-acid sequence, 600 residues long: Elongation factor 4 (600 aa).

Positions 4-187 (KYIRNFSIVA…AIIEQIPPPL (184 aa)) constitute a tr-type G domain. Residues 16–21 (DHGKST) and 134–137 (NKID) each bind GTP.

The protein belongs to the TRAFAC class translation factor GTPase superfamily. Classic translation factor GTPase family. LepA subfamily.

Its subcellular location is the cell membrane. It carries out the reaction GTP + H2O = GDP + phosphate + H(+). In terms of biological role, required for accurate and efficient protein synthesis under certain stress conditions. May act as a fidelity factor of the translation reaction, by catalyzing a one-codon backward translocation of tRNAs on improperly translocated ribosomes. Back-translocation proceeds from a post-translocation (POST) complex to a pre-translocation (PRE) complex, thus giving elongation factor G a second chance to translocate the tRNAs correctly. Binds to ribosomes in a GTP-dependent manner. The protein is Elongation factor 4 of Malacoplasma penetrans (strain HF-2) (Mycoplasma penetrans).